A 122-amino-acid polypeptide reads, in one-letter code: Large ribosomal subunit protein uL14 (122 aa).

This sequence belongs to the universal ribosomal protein uL14 family. In terms of assembly, part of the 50S ribosomal subunit. Forms a cluster with proteins L3 and L19. In the 70S ribosome, L14 and L19 interact and together make contacts with the 16S rRNA in bridges B5 and B8.

Binds to 23S rRNA. Forms part of two intersubunit bridges in the 70S ribosome. The chain is Large ribosomal subunit protein uL14 from Helicobacter hepaticus (strain ATCC 51449 / 3B1).